A 1153-amino-acid polypeptide reads, in one-letter code: MELNAYIGRAGTGKSKAIIEEIKEKMKQDPLGDPIVLIAPTQNTFQLEQAFVNDKTLNGSLRTEVLHFERLSYRVFQEVGGLMEQQLSKAGTEMMIYDIIQQHQSELRLYQSQVKYYGFSEKLYEQIQDFKKYAVSPQQLETYIAENNLQTRTKHKLQDIALVYKHLEDRINGEYVSTEDSLQRFIEMMDQSEWLKRAEIYIDGFHNFSTLEYQIIQSLVKYAKKVTIVLTTDGDRDLFSLFRKPSESLTHIEEIANNLNIQLHSRQFLDVQRFIHNDLKHLEQNFNALQFEPIPTEGNVEILEASGMREEINEVARRILRENREQGRRFQDIAILYRDESYAYLMESILPQYDIPYNIDVKSSMTHHPIMEMIRSLIEVIQTGWQFDPLMRLFKTNILTKKFKDSQYLIDILENFVLERGIYGKRWIDDKYFDIEQFRKMGLKRQPLTDEERETFERVIQLKNDVMKKVMLFEEKINNASTAIAFATAFYEAMEAFDLPSQLMTDRDTLDVNGEHKKAEEIDQIWNGLIQILDDLVTVFDDQSMSKTRFLELFDIGLEQLEFIMIPQTLDQVSIGTMDLAKVDNKQHVYLVGANDGVLPQTVTASSLITDEEKKYFQEQSSIELSPTADILQMDEAFVCYIAMTRSRAHVTFSYALMGASGDVKEPSPFLHQIQQLYTNLEVQNIHHQHQAEPLRLMEHPHQTKIALFESLKAWLDDELVAETWLDTYQVMRNDTRLNDGLTYLLSALTYDNQTVQLNPSLSKALYGSTINASVSRFEGYQACPFKHFASHGLRLNERTKYKLENFDLGDIFHRVLKFISEKVNGDFKNLNPKQIHKLTTEALSEILPEVQFNLLNSTAYYRYLSQRIGAIVETTLTALKYQGSHTKFTPQRFEASFRRKPKDQSELLATPLQTKQGIPINIRGQIDRIDTYQQGDESFVNIIDYKSSKYSGTLDLTKVYYGLQMQMMTYMDIVLQNKSRLGLTDMTKPGGLLYFHVHEPRIKLAWNQLSEDKRDTEFINSFKLSGLLNSATSVLDAFDTRLEPSYNSDIVPLGLKKDGGIKSNSKVADEQTIYKLIKHNKQNFIETASNIMDGHTEVAPMKYNQTLPCDFCNYKSVCHVDGMIDSKRYRTVDESINPLEAIQDVDLESEGE.

Residues 1–289 (MELNAYIGRA…KHLEQNFNAL (289 aa)) form the UvrD-like helicase ATP-binding domain. Residue 8-15 (GRAGTGKS) participates in ATP binding. The 315-residue stretch at 269–583 (LDVQRFIHND…SIGTMDLAKV (315 aa)) folds into the UvrD-like helicase C-terminal domain. The [4Fe-4S] cluster site is built by Cys-784, Cys-1110, Cys-1113, and Cys-1119.

It belongs to the helicase family. AddB/RexB type 1 subfamily. Heterodimer of AddA and AddB. Mg(2+) serves as cofactor. [4Fe-4S] cluster is required as a cofactor.

The heterodimer acts as both an ATP-dependent DNA helicase and an ATP-dependent, dual-direction single-stranded exonuclease. Recognizes the chi site generating a DNA molecule suitable for the initiation of homologous recombination. The AddB subunit has 5' -&gt; 3' nuclease activity but not helicase activity. The polypeptide is ATP-dependent helicase/deoxyribonuclease subunit B (Staphylococcus saprophyticus subsp. saprophyticus (strain ATCC 15305 / DSM 20229 / NCIMB 8711 / NCTC 7292 / S-41)).